We begin with the raw amino-acid sequence, 904 residues long: uncharacterized protein (904 aa).

2 disordered regions span residues 247–275 (KIGKSRTTEDVSMPPLHRGVGTPANSLEF) and 328–360 (GDSQTPGLHYPPTAGAQTLSPTSHPSSANHHFS). The span at 342 to 360 (GAQTLSPTSHPSSANHHFS) shows a compositional bias: polar residues. Residues 778–798 (VVQGMILMFAGGKLIFGGRVL) form a helical membrane-spanning segment.

Its subcellular location is the membrane. This is an uncharacterized protein from Homo sapiens (Human).